The sequence spans 272 residues: Type III pantothenate kinase (272 aa).

Position 6-13 (6-13) interacts with ATP; sequence DVRNTHTV. Residue 109-112 participates in substrate binding; sequence GADR. Asp-111 acts as the Proton acceptor in catalysis. Asp-131 is a binding site for K(+). Ser-134 contacts ATP. Thr-186 is a substrate binding site.

Belongs to the type III pantothenate kinase family. As to quaternary structure, homodimer. It depends on NH4(+) as a cofactor. K(+) serves as cofactor.

The protein localises to the cytoplasm. It catalyses the reaction (R)-pantothenate + ATP = (R)-4'-phosphopantothenate + ADP + H(+). Its pathway is cofactor biosynthesis; coenzyme A biosynthesis; CoA from (R)-pantothenate: step 1/5. Its function is as follows. Catalyzes the phosphorylation of pantothenate (Pan), the first step in CoA biosynthesis. This is Type III pantothenate kinase from Mycobacterium ulcerans (strain Agy99).